A 190-amino-acid chain; its full sequence is Homeobox protein SEBOX (190 aa).

Positions 1–11 (MPSPVDASSAD) are enriched in low complexity. Disordered regions lie at residues 1–24 (MPSP…RKRT) and 82–161 (ILSP…VHPS). Positions 19–78 (HRRKRTTFSKGQLLELERAFAAWPYPNISTHEHLAWVTCLPEAKVQVWFQKRWAKIIKNR) form a DNA-binding region, homeobox. Residues 89-100 (CPQSSCSLPDTL) show a composition bias toward polar residues.

It belongs to the paired homeobox family.

The protein resides in the nucleus. Probable transcription factor involved in the control of specification of mesoderm and endoderm. The polypeptide is Homeobox protein SEBOX (SEBOX) (Homo sapiens (Human)).